Here is a 174-residue protein sequence, read N- to C-terminus: VGHSELVGEIIRGVNVSALSRHKIMLPPRFSMVQVWPVRLPANHPLLTGQRRTALVANTSNMPVAAREASIYTGITLSEYFRWAEALREISGRLAEMPADSGYPAYLGARKHFPSVNWLISYSKALDEYYDKHFTEFVPLRTVGMLSNMISFYDMARIKADYAQLLEDMQNAFR.

This sequence belongs to the ATPase alpha/beta chains family. V-ATPase is a heteromultimeric enzyme made up of two complexes: the ATP-hydrolytic V1 complex and the proton translocation V0 complex. The V1 complex consists of three catalytic AB heterodimers that form a heterohexamer, three peripheral stalks each consisting of EG heterodimers, one central rotor including subunits D and F, and the regulatory subunits C and H. The proton translocation complex V0 consists of the proton transport subunit a, a ring of proteolipid subunits c9c'', rotary subunit d, subunits e and f, and the accessory subunits ATP6AP1/Ac45 and ATP6AP2/PRR. Interacts with the V0 complex V-ATPase subunit a4 ATP6V0A4. Interacts with WFS1. Interacts with alpha-crystallin B chain/CRYAB and with MTOR, forming a ternary complex.

It is found in the cytoplasm. The protein localises to the cytosol. Its subcellular location is the cytoplasmic vesicle. The protein resides in the secretory vesicle. It localises to the clathrin-coated vesicle membrane. It is found in the lysosome. The catalysed reaction is ATP + H2O + 4 H(+)(in) = ADP + phosphate + 5 H(+)(out). Its activity is regulated as follows. ATP hydrolysis occurs at the interface between the nucleotide-binding domains of subunits A and B. ATP hydrolysis triggers a conformational change in the subunits D and F, which induces a shift of subunit d. The c-ring is subsequently rotated and results in a continuous proton translocation across the membrane. Its function is as follows. Catalytic subunit of the V1 complex of vacuolar(H+)-ATPase (V-ATPase), a multisubunit enzyme composed of a peripheral complex (V1) that hydrolyzes ATP and a membrane integral complex (V0) that translocates protons. V-ATPase is responsible for acidifying and maintaining the pH of intracellular compartments and in some cell types, is targeted to the plasma membrane, where it is responsible for acidifying the extracellular environment. In aerobic conditions, involved in intracellular iron homeostasis, thus triggering the activity of Fe(2+) prolyl hydroxylase (PHD) enzymes, and leading to HIF1A hydroxylation and subsequent proteasomal degradation. May play a role in neurite development and synaptic connectivity. The sequence is that of V-type proton ATPase catalytic subunit A from Mesocricetus auratus (Golden hamster).